Here is a 394-residue protein sequence, read N- to C-terminus: Elongation factor Tu 1 (394 aa).

Residues 9–204 (KPHCNIGTIG…AIDDYIPQPT (196 aa)) enclose the tr-type G domain. Residues 18–25 (GHVDHGKT) form a G1 region. 18–25 (GHVDHGKT) lines the GTP pocket. Mg(2+) is bound at residue Thr-25. The interval 61-65 (GITIQ) is G2. Positions 82 to 85 (DCPG) are G3. GTP is bound by residues 82–86 (DCPGH) and 137–140 (NKID). The interval 137-140 (NKID) is G4. The tract at residues 174 to 176 (SAL) is G5.

Belongs to the TRAFAC class translation factor GTPase superfamily. Classic translation factor GTPase family. EF-Tu/EF-1A subfamily. In terms of assembly, monomer.

Its subcellular location is the cytoplasm. It catalyses the reaction GTP + H2O = GDP + phosphate + H(+). Functionally, GTP hydrolase that promotes the GTP-dependent binding of aminoacyl-tRNA to the A-site of ribosomes during protein biosynthesis. The chain is Elongation factor Tu 1 from Orientia tsutsugamushi (strain Boryong) (Rickettsia tsutsugamushi).